The sequence spans 99 residues: Large ribosomal subunit protein bL21 (99 aa).

It belongs to the bacterial ribosomal protein bL21 family. As to quaternary structure, part of the 50S ribosomal subunit. Contacts protein L20.

This protein binds to 23S rRNA in the presence of protein L20. This chain is Large ribosomal subunit protein bL21, found in Neorickettsia sennetsu (strain ATCC VR-367 / Miyayama) (Ehrlichia sennetsu).